A 62-amino-acid chain; its full sequence is [Ser6, Val10, Asp11]-phyllokinin (62 aa).

The first 22 residues, 1-22 (MSFLKKSLLLVLFLGLVSFSIC), serve as a signal peptide directing secretion. Residues 23-51 (EEEKRETEEEENEDDMDEESEEKKRESPD) constitute a propeptide that is removed on maturation. The disordered stretch occupies residues 24–62 (EEKRETEEEENEDDMDEESEEKKRESPDRPPGFSPFRVD). Acidic residues predominate over residues 30–42 (EEEENEDDMDEES).

This sequence belongs to the frog skin active peptide (FSAP) family. Bradykinin-related peptide subfamily. Expressed by the skin glands.

Its subcellular location is the secreted. In terms of biological role, induces relaxation of rat smooth muscle from tail artery and contraction of that from ileum, urinary bladder and uterus. Binds to both bradykinin receptor B1 (BDKRB1) and B2 (BDKRB2). The polypeptide is [Ser6, Val10, Asp11]-phyllokinin (Agalychnis spurrelli (Gliding leaf frog)).